Consider the following 279-residue polypeptide: DegV domain-containing protein lin1977 (279 aa).

The DegV domain maps to 4–278; sequence IKIITDSTAG…TGAFAFMYYT (275 aa). Hexadecanoate contacts are provided by S62 and S94.

Its function is as follows. May bind long-chain fatty acids, such as palmitate, and may play a role in lipid transport or fatty acid metabolism. This Listeria innocua serovar 6a (strain ATCC BAA-680 / CLIP 11262) protein is DegV domain-containing protein lin1977.